The following is an 88-amino-acid chain: Small ribosomal subunit protein uS17 (88 aa).

Belongs to the universal ribosomal protein uS17 family. In terms of assembly, part of the 30S ribosomal subunit.

In terms of biological role, one of the primary rRNA binding proteins, it binds specifically to the 5'-end of 16S ribosomal RNA. This is Small ribosomal subunit protein uS17 from Mycoplasmopsis agalactiae (strain NCTC 10123 / CIP 59.7 / PG2) (Mycoplasma agalactiae).